A 376-amino-acid polypeptide reads, in one-letter code: Nuclear hormone receptor family member nhr-124 (376 aa).

Positions 11–89 (PNICAICHQK…LGMRYHNSSE (79 aa)) form a DNA-binding region, nuclear receptor. 2 consecutive NR C4-type zinc fingers follow at residues 14-34 (CAIC…CNAC) and 50-72 (CKKG…CRSC). Residues 125-371 (HLHALNETRY…FSKILTEACR (247 aa)) form the NR LBD domain.

It belongs to the nuclear hormone receptor family.

It is found in the nucleus. Orphan nuclear receptor. This chain is Nuclear hormone receptor family member nhr-124 (nhr-124), found in Caenorhabditis elegans.